The primary structure comprises 127 residues: uncharacterized protein (127 aa).

This is an uncharacterized protein from Acanthamoeba polyphaga (Amoeba).